We begin with the raw amino-acid sequence, 450 residues long: Chromosomal replication initiator protein DnaA (450 aa).

Residues 1–73 (MNTKELWIEV…KNILKKLTGI (73 aa)) form a domain I, interacts with DnaA modulators region. The interval 73–104 (IQYNISFELEKNINKQASVISKIDTLTENNNL) is domain II. A domain III, AAA+ region region spans residues 105-326 (AYYENYTFEN…GAIKRLLFLA (222 aa)). Residues Gly149, Gly151, Lys152, and Thr153 each contribute to the ATP site. Residues 327-450 (VMNKKPNEII…NAIRRKIEGR (124 aa)) form a domain IV, binds dsDNA region.

Belongs to the DnaA family. Oligomerizes as a right-handed, spiral filament on DNA at oriC.

It localises to the cytoplasm. In terms of biological role, plays an essential role in the initiation and regulation of chromosomal replication. ATP-DnaA binds to the origin of replication (oriC) to initiate formation of the DNA replication initiation complex once per cell cycle. Binds the DnaA box (a 9 base pair repeat at the origin) and separates the double-stranded (ds)DNA. Forms a right-handed helical filament on oriC DNA; dsDNA binds to the exterior of the filament while single-stranded (ss)DNA is stabiized in the filament's interior. The ATP-DnaA-oriC complex binds and stabilizes one strand of the AT-rich DNA unwinding element (DUE), permitting loading of DNA polymerase. After initiation quickly degrades to an ADP-DnaA complex that is not apt for DNA replication. Binds acidic phospholipids. The polypeptide is Chromosomal replication initiator protein DnaA (Spiroplasma citri).